Reading from the N-terminus, the 422-residue chain is O-methyltransferase kk1A (422 aa).

Aspartate 277 provides a ligand contact to S-adenosyl-L-methionine. Histidine 320 acts as the Proton acceptor in catalysis.

The protein belongs to the class I-like SAM-binding methyltransferase superfamily. Cation-independent O-methyltransferase family.

Its pathway is secondary metabolite biosynthesis. Its function is as follows. O-methyltransferase; part of the gene cluster that mediates the biosynthesis of KK-1, a novel cyclic depsipeptide with 10 residues which is a promising active compound with high activity against many plant pathogens, especially Botrytis cinerea. Within the pathway, kk1A is responsible for the O-methylation of tyrosine as a free amino acid before its activation as an aminoacyl-AMP by the corresponding A domain of kk1B. The nonribosomal peptide synthetase (NRPS) kk1B catalyzes the elongation and cyclization of the decapeptide chain composed of 1 D-lactic acid residue (D-Lac), 1 pipecolic acid residue (Pip), 1 aspartic acid residue (Asp), 1 isoleucine residue (Ile), 1 glycine residue (Gly), 1 tyrosine residue (Tyr) and 4 valine residues (Val). The Asp, Ile and 3 Val residues are N-methylated by the 5 methyltransferase domains from the NRPS (found in modules 3, 5, 6, 7 and 9), whereas the Tyr residue is O-methylated by the cluster encoded O-methyltransferase kk1A. The thioesterase kk1J is likely to be involved in the corrective mechanism of peptide chain synthesis. The D-lactate dehydrogenase kk1H is involved in the synthesis of D-lactic acid from pyruvic acid, which is recognized by the A domain of the first kk1B module. The pyrroline-5-carboxylate reductase kk1I is involved in the synthesis of the L-pipecolic acid residue of KK-1 from delta-1-pyrroline-5-carboxylate (P5C), a metabolic intermediate of lysine. It is still unclear how kk1C and kk1D are involved in the production of KK-1. This is O-methyltransferase kk1A from Curvularia clavata.